The sequence spans 185 residues: Adenine phosphoribosyltransferase (185 aa).

Belongs to the purine/pyrimidine phosphoribosyltransferase family. In terms of assembly, homodimer.

It localises to the cytoplasm. The enzyme catalyses AMP + diphosphate = 5-phospho-alpha-D-ribose 1-diphosphate + adenine. It functions in the pathway purine metabolism; AMP biosynthesis via salvage pathway; AMP from adenine: step 1/1. Functionally, catalyzes a salvage reaction resulting in the formation of AMP, that is energically less costly than de novo synthesis. The protein is Adenine phosphoribosyltransferase of Nocardioides sp. (strain ATCC BAA-499 / JS614).